We begin with the raw amino-acid sequence, 465 residues long: Ribulose bisphosphate carboxylase large chain (465 aa).

An N6,N6,N6-trimethyllysine modification is found at Lys-4. The substrate site is built by Asn-113 and Thr-163. Lys-165 acts as the Proton acceptor in catalysis. Position 167 (Lys-167) interacts with substrate. Residues Lys-191, Asp-193, and Glu-194 each contribute to the Mg(2+) site. Lys-191 is modified (N6-carboxylysine). Catalysis depends on His-284, which acts as the Proton acceptor. Substrate-binding residues include Arg-285, His-317, and Ser-369.

Belongs to the RuBisCO large chain family. Type I subfamily. In terms of assembly, heterohexadecamer of 8 large chains and 8 small chains; disulfide-linked. The disulfide link is formed within the large subunit homodimers. The cofactor is Mg(2+). The disulfide bond which can form in the large chain dimeric partners within the hexadecamer appears to be associated with oxidative stress and protein turnover.

Its subcellular location is the plastid. The protein localises to the chloroplast. It catalyses the reaction 2 (2R)-3-phosphoglycerate + 2 H(+) = D-ribulose 1,5-bisphosphate + CO2 + H2O. The catalysed reaction is D-ribulose 1,5-bisphosphate + O2 = 2-phosphoglycolate + (2R)-3-phosphoglycerate + 2 H(+). In terms of biological role, ruBisCO catalyzes two reactions: the carboxylation of D-ribulose 1,5-bisphosphate, the primary event in carbon dioxide fixation, as well as the oxidative fragmentation of the pentose substrate in the photorespiration process. Both reactions occur simultaneously and in competition at the same active site. The sequence is that of Ribulose bisphosphate carboxylase large chain from Idesia polycarpa (Iigiri tree).